A 283-amino-acid polypeptide reads, in one-letter code: Bifunctional protein FolD (283 aa).

Residues 166-168, Ser-191, and Thr-232 contribute to the NADP(+) site; that span reads GRS.

This sequence belongs to the tetrahydrofolate dehydrogenase/cyclohydrolase family. In terms of assembly, homodimer.

It carries out the reaction (6R)-5,10-methylene-5,6,7,8-tetrahydrofolate + NADP(+) = (6R)-5,10-methenyltetrahydrofolate + NADPH. It catalyses the reaction (6R)-5,10-methenyltetrahydrofolate + H2O = (6R)-10-formyltetrahydrofolate + H(+). It participates in one-carbon metabolism; tetrahydrofolate interconversion. Its function is as follows. Catalyzes the oxidation of 5,10-methylenetetrahydrofolate to 5,10-methenyltetrahydrofolate and then the hydrolysis of 5,10-methenyltetrahydrofolate to 10-formyltetrahydrofolate. This chain is Bifunctional protein FolD, found in Halothermothrix orenii (strain H 168 / OCM 544 / DSM 9562).